The primary structure comprises 548 residues: Chaperonin GroEL 2 (548 aa).

Residues 29–32 (TLGP), 86–90 (DGTTT), glycine 418, 482–484 (NAA), and aspartate 498 contribute to the ATP site.

The protein belongs to the chaperonin (HSP60) family. Forms a cylinder of 14 subunits composed of two heptameric rings stacked back-to-back. Interacts with the co-chaperonin GroES.

It localises to the cytoplasm. The enzyme catalyses ATP + H2O + a folded polypeptide = ADP + phosphate + an unfolded polypeptide.. In terms of biological role, together with its co-chaperonin GroES, plays an essential role in assisting protein folding. The GroEL-GroES system forms a nano-cage that allows encapsulation of the non-native substrate proteins and provides a physical environment optimized to promote and accelerate protein folding. This is Chaperonin GroEL 2 from Corynebacterium glutamicum (strain ATCC 13032 / DSM 20300 / JCM 1318 / BCRC 11384 / CCUG 27702 / LMG 3730 / NBRC 12168 / NCIMB 10025 / NRRL B-2784 / 534).